We begin with the raw amino-acid sequence, 518 residues long: Efflux pump terJ (518 aa).

A helical membrane pass occupies residues 43–63; sequence IAFIVVVCMAQLVSQAGLGQV. Residue Asn79 is glycosylated (N-linked (GlcNAc...) asparagine). Helical transmembrane passes span 82–102, 112–132, 135–155, 177–197, 204–224, 244–264, 272–292, 311–331, 339–359, 364–384, 400–420, and 439–459; these read QLSW…LGAG, LLFT…AFAE, GPVF…FLLP, AFGS…ALAA, WGFW…IFWV, IAGC…LNMA, PYIY…GYIE, FVLA…FYGW, GISP…GFVA, GLIL…AAFC, WAQL…SFPA, and SLVA…GAIV. A glycan (N-linked (GlcNAc...) asparagine) is linked at Asn466. Residues 477 to 497 traverse the membrane as a helical segment; that stretch reads AWYLGVGLAASGIILTMFFAL.

This sequence belongs to the major facilitator superfamily.

Its subcellular location is the cell membrane. Efflux pump that might be required for efficient secretion of terrein or other secondary metabolies produced by the terrein genne cluster. This Aspergillus terreus (strain NIH 2624 / FGSC A1156) protein is Efflux pump terJ.